The primary structure comprises 219 residues: Probable transcriptional regulator flp (219 aa).

The 69-residue stretch at 144-212 (DSINVRLTHY…GKQVRILNAE (69 aa)) folds into the HTH crp-type domain. The H-T-H motif DNA-binding region spans 191–210 (KRLAEEKLIERSGKQVRILN).

The chain is Probable transcriptional regulator flp (flp) from Lacticaseibacillus casei (Lactobacillus casei).